The following is a 210-amino-acid chain: Inner membrane-spanning protein YciB (210 aa).

The next 6 membrane-spanning stretches (helical) occupy residues 12–32, 53–73, 78–98, 115–135, 153–173, and 175–195; these read EVSP…FFFA, IFIA…VSWM, LPMM…LTLW, LFGA…GYVF, WGVF…SFST, and FWVA…TLAQ.

Belongs to the YciB family.

It is found in the cell inner membrane. In terms of biological role, plays a role in cell envelope biogenesis, maintenance of cell envelope integrity and membrane homeostasis. The polypeptide is Inner membrane-spanning protein YciB (Sinorhizobium medicae (strain WSM419) (Ensifer medicae)).